We begin with the raw amino-acid sequence, 236 residues long: Uridylate kinase (236 aa).

K12–G15 contacts ATP. Residues G20–G25 are involved in allosteric activation by GTP. UMP is bound at residue G54. The ATP site is built by G55 and R59. Residues D72 and T133 to T140 contribute to the UMP site. Residues N161, Y166, and D169 each contribute to the ATP site.

Belongs to the UMP kinase family. Homohexamer.

The protein resides in the cytoplasm. It catalyses the reaction UMP + ATP = UDP + ADP. It functions in the pathway pyrimidine metabolism; CTP biosynthesis via de novo pathway; UDP from UMP (UMPK route): step 1/1. Allosterically activated by GTP. Inhibited by UTP. In terms of biological role, catalyzes the reversible phosphorylation of UMP to UDP. This is Uridylate kinase from Alkaliphilus oremlandii (strain OhILAs) (Clostridium oremlandii (strain OhILAs)).